Reading from the N-terminus, the 275-residue chain is Sulfur carrier protein FdhD (275 aa).

The active-site Cysteine persulfide intermediate is Cys-121. Phe-258–Arg-263 contacts Mo-bis(molybdopterin guanine dinucleotide).

This sequence belongs to the FdhD family.

It localises to the cytoplasm. Functionally, required for formate dehydrogenase (FDH) activity. Acts as a sulfur carrier protein that transfers sulfur from IscS to the molybdenum cofactor prior to its insertion into FDH. The polypeptide is Sulfur carrier protein FdhD (Yersinia enterocolitica serotype O:8 / biotype 1B (strain NCTC 13174 / 8081)).